The primary structure comprises 382 residues: Leucoanthocyanidin reductase (382 aa).

NADP(+) contacts are provided by residues glycine 19–glycine 25, arginine 44, and lysine 52. Lysine 142 functions as the Proton acceptor in the catalytic mechanism. Arginine 146 provides a ligand contact to NADP(+).

The protein belongs to the NmrA-type oxidoreductase family. Isoflavone reductase subfamily. As to quaternary structure, monomer.

The enzyme catalyses (2R,3S)-catechin + NADP(+) + H2O = (2R,3S,4S)-leucocyanidin + NADPH + H(+). It functions in the pathway flavonoid metabolism; proanthocyanidin biosynthesis. In terms of biological role, catalyzes the synthesis of catechin from 3,4-cis-leucocyanidin. Also synthesizes afzelechin and gallocatechin. This chain is Leucoanthocyanidin reductase (LAR), found in Desmodium uncinatum (Silverleaf Spanish clover).